A 132-amino-acid polypeptide reads, in one-letter code: Small ribosomal subunit protein uS8 (132 aa).

Belongs to the universal ribosomal protein uS8 family. As to quaternary structure, part of the 30S ribosomal subunit. Contacts proteins S5 and S12.

One of the primary rRNA binding proteins, it binds directly to 16S rRNA central domain where it helps coordinate assembly of the platform of the 30S subunit. The polypeptide is Small ribosomal subunit protein uS8 (Mycobacterium bovis (strain ATCC BAA-935 / AF2122/97)).